The chain runs to 860 residues: Leucine--tRNA ligase (860 aa).

The 'HIGH' region signature appears at 42-52 (PYPSGRLHMGH). Positions 619 to 623 (KMSKS) match the 'KMSKS' region motif. Lysine 622 provides a ligand contact to ATP.

Belongs to the class-I aminoacyl-tRNA synthetase family.

Its subcellular location is the cytoplasm. It carries out the reaction tRNA(Leu) + L-leucine + ATP = L-leucyl-tRNA(Leu) + AMP + diphosphate. This chain is Leucine--tRNA ligase, found in Salmonella paratyphi A (strain ATCC 9150 / SARB42).